A 592-amino-acid chain; its full sequence is MLTEFNSIPATEAEQGIVSDLVRTLGPISFTLQQTADRIPTIWIDRDIVHAVLRHLRDGATRRFQMLYDLTAIDERQRVHRDGLPKSDFTLVYHLVSFERNDDVRVKVPLAEGALEVQSIADIWPNANWYEREVWDMFGIGFAGHPTLFRILTPPTWTGHPLRKDYIARATEMGPYILTEEKERAEQEALRFNPEAWGMKRHSENSDFMFLNLGPNHPSVHGVFRIILQLEGEEIVDAVPEIGFHHRGAEKMAERQSWHTYIPYTDRIDYLGGVMNNFPYVMAVERLAGIEVPSRAQMIRIMLAELFRIASHLVFYGTMSQDVGQLSPVFYMFSDRERVFQIIEAICGFRMHPAWFRIGGVAADLPQGWDRMIRDYLGYQSKRLDEYDKLVMRNRLFKARTIGVGAYTLEEALDWGVTGPGLRACGLGWDYRRQRPYSGYDQLEFDIPICHNGDCYDRVVVHIEEIRQSLRIIRQCLDNMPPGPYKSDHRLTTPPLKERTMQDIETLITHFLNVSWGPVLPPGEAMVSIEATKGINGYYLVADGDTVSYRTRIRTPSFPHLQMIPLISRGAYVADLIAIIGSIDFVMADVDR.

The segment at 1–183 (MLTEFNSIPA…GPYILTEEKE (183 aa)) is NADH dehydrogenase I subunit C. An NADH dehydrogenase I subunit D region spans residues 207 to 592 (DFMFLNLGPN…IDFVMADVDR (386 aa)).

This sequence in the N-terminal section; belongs to the complex I 30 kDa subunit family. It in the C-terminal section; belongs to the complex I 49 kDa subunit family. In terms of assembly, NDH-1 is composed of 13 different subunits. Subunits NuoB, CD, E, F, and G constitute the peripheral sector of the complex.

Its subcellular location is the cell inner membrane. The catalysed reaction is a quinone + NADH + 5 H(+)(in) = a quinol + NAD(+) + 4 H(+)(out). In terms of biological role, NDH-1 shuttles electrons from NADH, via FMN and iron-sulfur (Fe-S) centers, to quinones in the respiratory chain. The immediate electron acceptor for the enzyme in this species is believed to be ubiquinone. Couples the redox reaction to proton translocation (for every two electrons transferred, four hydrogen ions are translocated across the cytoplasmic membrane), and thus conserves the redox energy in a proton gradient. The chain is NADH-quinone oxidoreductase subunit C/D from Acidiphilium cryptum (strain JF-5).